Here is a 397-residue protein sequence, read N- to C-terminus: Subtilisin-like protease 12 (397 aa).

Positions 1-19 are cleaved as a signal peptide; sequence MSIFKMMLIYFAILWVVNA. The propeptide occupies 20–116; sequence AQLLDIDPQG…VEPNKEMQVA (97 aa). The Inhibitor I9 domain maps to 35–115; it reads YIVVMKDRVS…FVEPNKEMQV (81 aa). Residues Asn123, Asn136, and Asn150 are each glycosylated (N-linked (GlcNAc...) asparagine). A Peptidase S8 domain is found at 125 to 397; it reads TWGLSRISHK…NKLLYNGSGA (273 aa). Residues Asp157 and His188 each act as charge relay system in the active site. Residues Asn249, Asn305, and Asn334 are each glycosylated (N-linked (GlcNAc...) asparagine). Ser343 serves as the catalytic Charge relay system. N-linked (GlcNAc...) asparagine glycans are attached at residues Asn385 and Asn393.

It belongs to the peptidase S8 family.

Its subcellular location is the secreted. In terms of biological role, secreted subtilisin-like serine protease with keratinolytic activity that contributes to pathogenicity. This Trichophyton verrucosum (strain HKI 0517) protein is Subtilisin-like protease 12 (SUB12).